A 334-amino-acid chain; its full sequence is Ornithine carbamoyltransferase (334 aa).

Carbamoyl phosphate-binding positions include S57 to T60, Q84, R108, and H135 to Q138. Residues N168, D232, and S236–M237 contribute to the L-ornithine site. Residues C274–L275 and R321 each bind carbamoyl phosphate.

This sequence belongs to the aspartate/ornithine carbamoyltransferase superfamily. OTCase family.

It localises to the cytoplasm. The enzyme catalyses carbamoyl phosphate + L-ornithine = L-citrulline + phosphate + H(+). It functions in the pathway amino-acid degradation; L-arginine degradation via ADI pathway; carbamoyl phosphate from L-arginine: step 2/2. In terms of biological role, reversibly catalyzes the transfer of the carbamoyl group from carbamoyl phosphate (CP) to the N(epsilon) atom of ornithine (ORN) to produce L-citrulline. This Haemophilus influenzae (strain PittGG) protein is Ornithine carbamoyltransferase.